Here is a 667-residue protein sequence, read N- to C-terminus: Long-chain-fatty-acid--CoA ligase ACSBG2 (667 aa).

The segment covering 1 to 14 (MTQEKKAEDPDRGM) has biased composition (basic and acidic residues). A disordered region spans residues 1–20 (MTQEKKAEDPDRGMDTTSAA). ATP contacts are provided by residues 227-235 (TSGTTGSPK), 418-423 (EIYGMT), aspartate 496, arginine 511, and arginine 624.

It belongs to the ATP-dependent AMP-binding enzyme family. Bubblegum subfamily.

The protein resides in the cytoplasm. The protein localises to the membrane. It catalyses the reaction a long-chain fatty acid + ATP + CoA = a long-chain fatty acyl-CoA + AMP + diphosphate. The catalysed reaction is (5Z,8Z,11Z,14Z)-eicosatetraenoate + ATP + CoA = (5Z,8Z,11Z,14Z)-eicosatetraenoyl-CoA + AMP + diphosphate. The enzyme catalyses hexadecanoate + ATP + CoA = hexadecanoyl-CoA + AMP + diphosphate. It carries out the reaction (9Z)-octadecenoate + ATP + CoA = (9Z)-octadecenoyl-CoA + AMP + diphosphate. It catalyses the reaction (9Z,12Z)-octadecadienoate + ATP + CoA = (9Z,12Z)-octadecadienoyl-CoA + AMP + diphosphate. The catalysed reaction is tetracosanoate + ATP + CoA = tetracosanoyl-CoA + AMP + diphosphate. Functionally, catalyzes the conversion of fatty acids such as long chain and very long-chain fatty acids to their active form acyl-CoAs for both synthesis of cellular lipids, and degradation via beta-oxidation. Can activate diverse saturated, monosaturated and polyunsaturated fatty acids. Has increased ability to activate oleic and linoleic acid. May play a role in spermatogenesis. The chain is Long-chain-fatty-acid--CoA ligase ACSBG2 from Rattus norvegicus (Rat).